Here is a 507-residue protein sequence, read N- to C-terminus: MDVPAFRERLLRLAPKDPLVLAVSGGGDSVALALLVKEAGRQAVVAHLDHGLRPESPLDQAFVRALAERLGFPFFTERVEVARIAQARGENLEAVAREVRYAFLHRVAREVGARAILTAHTLDDQAETVLLQLLQGTARATGIREREGIVVRPLLAHTREELRAYLRARGEAWREDPTNQDPALDRNFLRLFVFPLLEERFPAAKRALARFAEARAEEEGVLERQAEARLLPDPRFFVPAFRAAPLLEAPLAVRRRALRRLLEKLGLRPEARLVLLLEEALRGRPQTLPGGVLARRKGGTLFLLPPRPRLPLPPGFRRPAPGDYLERPSGRKRLVDFLAEKGVPRELKPLWPVRAEGNRVVEVLGLYPPPPEEAHMAEALAEAASAFREGEVPVGAVLVLPGRVLRAHNRVEGLRDPTAHAEMLLLREAGPEARGGRLYVTLEPCLMCHHALAQAGVEVVYGAENLKEGALTRFGLPTRARGGVRERECAKLLRDFFARLREGCRSG.

24–29 (SGGGDS) is an ATP binding site. Residues 370–500 (PPEEAHMAEA…KLLRDFFARL (131 aa)) form the CMP/dCMP-type deaminase domain. Zn(2+)-binding residues include His420, Cys445, and Cys448.

It belongs to the tRNA(Ile)-lysidine synthase family.

It is found in the cytoplasm. It carries out the reaction cytidine(34) in tRNA(Ile2) + L-lysine + ATP = lysidine(34) in tRNA(Ile2) + AMP + diphosphate + H(+). Its function is as follows. Ligates lysine onto the cytidine present at position 34 of the AUA codon-specific tRNA(Ile) that contains the anticodon CAU, in an ATP-dependent manner. Cytidine is converted to lysidine, thus changing the amino acid specificity of the tRNA from methionine to isoleucine. The protein is tRNA(Ile)-lysidine synthase (tilS) of Thermus thermophilus (strain ATCC 27634 / DSM 579 / HB8).